The chain runs to 195 residues: Glutamyl-tRNA(Gln) amidotransferase subunit C, mitochondrial (195 aa).

The N-terminal 18 residues, 1–18 (MNLSTIGFQVIFKQRLRC), are a transit peptide targeting the mitochondrion.

The protein belongs to the GatC family. As to quaternary structure, subunit of the heterotrimeric GatCAB amidotransferase (AdT) complex, composed of A, B and C subunits.

The protein localises to the mitochondrion. It catalyses the reaction L-glutamyl-tRNA(Gln) + L-glutamine + ATP + H2O = L-glutaminyl-tRNA(Gln) + L-glutamate + ADP + phosphate + H(+). In terms of biological role, allows the formation of correctly charged Gln-tRNA(Gln) through the transamidation of misacylated Glu-tRNA(Gln) in the mitochondria. The reaction takes place in the presence of glutamine and ATP through an activated gamma-phospho-Glu-tRNA(Gln). The protein is Glutamyl-tRNA(Gln) amidotransferase subunit C, mitochondrial of Brugia malayi (Filarial nematode worm).